A 108-amino-acid chain; its full sequence is Small ribosomal subunit protein uS17 (108 aa).

The protein belongs to the universal ribosomal protein uS17 family. Part of the 30S ribosomal subunit.

Functionally, one of the primary rRNA binding proteins, it binds specifically to the 5'-end of 16S ribosomal RNA. The polypeptide is Small ribosomal subunit protein uS17 (Methanocorpusculum labreanum (strain ATCC 43576 / DSM 4855 / Z)).